The following is a 260-amino-acid chain: uncharacterized protein (260 aa).

An N-terminal signal peptide occupies residues 1–22 (MKHSKKLLLCISFLLITIFISG). A lipid anchor (N-palmitoyl cysteine) is attached at C23. The S-diacylglycerol cysteine moiety is linked to residue C23.

The protein belongs to the staphylococcal tandem lipoprotein family.

The protein resides in the cell membrane. This is an uncharacterized protein from Staphylococcus epidermidis (strain ATCC 35984 / DSM 28319 / BCRC 17069 / CCUG 31568 / BM 3577 / RP62A).